Consider the following 425-residue polypeptide: Adenylosuccinate synthetase (425 aa).

Residues 12-18 (GDEGKGK) and 40-42 (GHT) contribute to the GTP site. The Proton acceptor role is filled by Asp-13. Residues Asp-13 and Gly-40 each contribute to the Mg(2+) site. IMP contacts are provided by residues 13 to 16 (DEGK), 38 to 41 (NAGH), Thr-130, Arg-144, Gln-224, Thr-239, and Arg-301. Catalysis depends on His-41, which acts as the Proton donor. 297–303 (TVSNRRR) contributes to the substrate binding site. Residues Arg-303, 329 to 331 (KLD), and 411 to 413 (STS) each bind GTP.

The protein belongs to the adenylosuccinate synthetase family. Homodimer. The cofactor is Mg(2+).

It localises to the cytoplasm. The catalysed reaction is IMP + L-aspartate + GTP = N(6)-(1,2-dicarboxyethyl)-AMP + GDP + phosphate + 2 H(+). Its pathway is purine metabolism; AMP biosynthesis via de novo pathway; AMP from IMP: step 1/2. Functionally, plays an important role in the de novo pathway of purine nucleotide biosynthesis. Catalyzes the first committed step in the biosynthesis of AMP from IMP. The sequence is that of Adenylosuccinate synthetase from Wolbachia pipientis subsp. Culex pipiens (strain wPip).